A 20-amino-acid chain; its full sequence is Cytochrome c oxidase subunit 6A1, mitochondrial (20 aa).

Belongs to the cytochrome c oxidase subunit 6A family. As to quaternary structure, component of the cytochrome c oxidase (complex IV, CIV), a multisubunit enzyme composed of 14 subunits. The complex is composed of a catalytic core of 3 subunits MT-CO1, MT-CO2 and MT-CO3, encoded in the mitochondrial DNA, and 11 supernumerary subunits COX4I, COX5A, COX5B, COX6A, COX6B, COX6C, COX7A, COX7B, COX7C, COX8 and NDUFA4, which are encoded in the nuclear genome. The complex exists as a monomer or a dimer and forms supercomplexes (SCs) in the inner mitochondrial membrane with NADH-ubiquinone oxidoreductase (complex I, CI) and ubiquinol-cytochrome c oxidoreductase (cytochrome b-c1 complex, complex III, CIII), resulting in different assemblies (supercomplex SCI(1)III(2)IV(1) and megacomplex MCI(2)III(2)IV(2)). Liver specific isoform.

It is found in the mitochondrion inner membrane. It functions in the pathway energy metabolism; oxidative phosphorylation. In terms of biological role, component of the cytochrome c oxidase, the last enzyme in the mitochondrial electron transport chain which drives oxidative phosphorylation. The respiratory chain contains 3 multisubunit complexes succinate dehydrogenase (complex II, CII), ubiquinol-cytochrome c oxidoreductase (cytochrome b-c1 complex, complex III, CIII) and cytochrome c oxidase (complex IV, CIV), that cooperate to transfer electrons derived from NADH and succinate to molecular oxygen, creating an electrochemical gradient over the inner membrane that drives transmembrane transport and the ATP synthase. Cytochrome c oxidase is the component of the respiratory chain that catalyzes the reduction of oxygen to water. Electrons originating from reduced cytochrome c in the intermembrane space (IMS) are transferred via the dinuclear copper A center (CU(A)) of subunit 2 and heme A of subunit 1 to the active site in subunit 1, a binuclear center (BNC) formed by heme A3 and copper B (CU(B)). The BNC reduces molecular oxygen to 2 water molecules unsing 4 electrons from cytochrome c in the IMS and 4 protons from the mitochondrial matrix. In Ovis aries (Sheep), this protein is Cytochrome c oxidase subunit 6A1, mitochondrial (COX6A1).